The primary structure comprises 704 residues: DNA ligase (704 aa).

Residues 43 to 47, 92 to 93, and glutamate 124 each bind NAD(+); these read DADYD and SL. The active-site N6-AMP-lysine intermediate is lysine 126. Residues arginine 147, glutamate 182, lysine 298, and lysine 322 each contribute to the NAD(+) site. Positions 427, 430, 445, and 451 each coordinate Zn(2+). The 80-residue stretch at 625–704 folds into the BRCT domain; that stretch reads PVASPVAGKI…DGWLRLIGDA (80 aa).

Belongs to the NAD-dependent DNA ligase family. LigA subfamily. It depends on Mg(2+) as a cofactor. Mn(2+) serves as cofactor.

The catalysed reaction is NAD(+) + (deoxyribonucleotide)n-3'-hydroxyl + 5'-phospho-(deoxyribonucleotide)m = (deoxyribonucleotide)n+m + AMP + beta-nicotinamide D-nucleotide.. Functionally, DNA ligase that catalyzes the formation of phosphodiester linkages between 5'-phosphoryl and 3'-hydroxyl groups in double-stranded DNA using NAD as a coenzyme and as the energy source for the reaction. It is essential for DNA replication and repair of damaged DNA. The chain is DNA ligase from Cereibacter sphaeroides (strain ATCC 17029 / ATH 2.4.9) (Rhodobacter sphaeroides).